The following is a 110-amino-acid chain: U1-lycotoxin-Ls1kk (110 aa).

The signal sequence occupies residues 1 to 20 (MKFVLLFGVFLVTLFSYSSA). Residues 21 to 44 (EMLDDFDQADEDELLSLIEKEEAR) constitute a propeptide that is removed on maturation. 4 cysteine pairs are disulfide-bonded: C47–C62, C54–C71, C61–C89, and C73–C87.

Belongs to the neurotoxin 19 (CSTX) family. 03 subfamily. In terms of tissue distribution, expressed by the venom gland.

It localises to the secreted. In Lycosa singoriensis (Wolf spider), this protein is U1-lycotoxin-Ls1kk.